Here is a 347-residue protein sequence, read N- to C-terminus: BSD domain-containing protein C22A12.14c (347 aa).

Phosphothreonine occurs at positions 123 and 125. The 53-residue stretch at 167-219 (WEKEISIDGKTEEISLLLEEYPDLRKQMESLVPSEVSYDDFWKRFFWHKEVVQ) folds into the BSD domain. The disordered stretch occupies residues 229 to 347 (DEEEIFSWGD…DDDEDDDDWE (119 aa)). Residues serine 235, serine 241, and serine 246 each carry the phosphoserine modification. Residues 240 to 251 (RSDEEESDNEQV) are compositionally biased toward acidic residues. Basic and acidic residues predominate over residues 297 to 312 (HDGEVDGEVKEEEENK). Positions 313–325 (VSSSSNIEASQSS) are enriched in low complexity. A compositionally biased stretch (basic and acidic residues) spans 327 to 337 (EVKDEANRKVD). Residues 338–347 (DDDEDDDDWE) are compositionally biased toward acidic residues.

It localises to the cytoplasm. The chain is BSD domain-containing protein C22A12.14c from Schizosaccharomyces pombe (strain 972 / ATCC 24843) (Fission yeast).